The chain runs to 173 residues: uncharacterized protein (173 aa).

Belongs to the ycf73 family.

It localises to the plastid. The protein resides in the chloroplast. This is an uncharacterized protein from Saccharum hybrid (Sugarcane).